A 199-amino-acid chain; its full sequence is Fe/S biogenesis protein NfuA (199 aa).

Residues Cys151 and Cys154 each coordinate [4Fe-4S] cluster.

The protein belongs to the NfuA family. Homodimer. It depends on [4Fe-4S] cluster as a cofactor.

Involved in iron-sulfur cluster biogenesis. Binds a 4Fe-4S cluster, can transfer this cluster to apoproteins, and thereby intervenes in the maturation of Fe/S proteins. Could also act as a scaffold/chaperone for damaged Fe/S proteins. This chain is Fe/S biogenesis protein NfuA, found in Xanthomonas oryzae pv. oryzae (strain PXO99A).